The sequence spans 610 residues: Atypical kinase COQ8, mitochondrial (610 aa).

The segment covering 98 to 111 (GVKHLQEQSSKEIK) has biased composition (basic and acidic residues). A disordered region spans residues 98–144 (GVKHLQEQSSKEIKNPISQPILPNKKDEISPAKPSAIDSSIKDVTKS).

Belongs to the protein kinase superfamily. ADCK protein kinase family.

The protein localises to the mitochondrion. Its pathway is cofactor biosynthesis; ubiquinone biosynthesis. Atypical kinase involved in the biosynthesis of coenzyme Q, also named ubiquinone, an essential lipid-soluble electron transporter for aerobic cellular respiration. Its substrate specificity is still unclear: may act as a protein kinase that mediates phosphorylation of coq3. According to other reports, acts as a small molecule kinase, possibly a lipid kinase that phosphorylates a prenyl lipid in the ubiquinone biosynthesis pathway, as suggested by its ability to bind coenzyme Q lipid intermediates. In Schizosaccharomyces pombe (strain 972 / ATCC 24843) (Fission yeast), this protein is Atypical kinase COQ8, mitochondrial.